We begin with the raw amino-acid sequence, 633 residues long: E3 ubiquitin-protein ligase ZSWIM2 (633 aa).

The SWIM-type zinc-finger motif lies at 54–87; that stretch reads FRVFLGNPHVCNCSTFPKGGELCKHICWVLLKKF. The RING-type 1 zinc finger occupies 147 to 198; the sequence is CSICQELLLEKKLPVTFCRFGCGNSIHIKCMKILANYQSTSNTSMLKCPLCR. The ZZ-type zinc finger occupies 229-280; the sequence is HLGIPCNNCKQFPIEGKCYKCTECIEYHLCQECFDSCCHLSHTFTFREKRNQ. Zn(2+) contacts are provided by Cys-234, Cys-237, Cys-249, Cys-252, Cys-258, Cys-261, His-267, and His-270. The RING-type 2 zinc-finger motif lies at 344-388; it reads CLLCLKAFHLGQHTRLLPCTHKFHRKCIDNWLFHKCNSCPIDGQV.

Dimer. Interacts with UBE2D1. In terms of processing, polyubiquitinated. Polyubiquitination is followed by degradation via the proteasome. Expression is testis-specific.

It carries out the reaction S-ubiquitinyl-[E2 ubiquitin-conjugating enzyme]-L-cysteine + [acceptor protein]-L-lysine = [E2 ubiquitin-conjugating enzyme]-L-cysteine + N(6)-ubiquitinyl-[acceptor protein]-L-lysine.. Its function is as follows. E3 ubiquitin-protein ligase involved in the regulation of Fas-, DR3- and DR4-mediated apoptosis. Functions in conjunction with the UBE2D1, UBE2D3 and UBE2E1 E2 ubiquitin-conjugating enzymes. This chain is E3 ubiquitin-protein ligase ZSWIM2, found in Homo sapiens (Human).